The primary structure comprises 322 residues: Sideroflexin-2 (322 aa).

N-acetylmethionine is present on Met1. Helical transmembrane passes span Met100 to Val122, Ser142 to Met164, Leu174 to Ile192, Val228 to Leu250, and Pro265 to Pro287.

Belongs to the sideroflexin family. As to expression, widely expressed, highest levels in kidney, liver, and pancreas.

It is found in the mitochondrion inner membrane. The protein localises to the mitochondrion outer membrane. The enzyme catalyses L-serine(in) = L-serine(out). In terms of biological role, mitochondrial amino-acid transporter that mediates transport of serine into mitochondria. Involved in mitochondrial iron homeostasis by regulating heme biosynthesis. This Homo sapiens (Human) protein is Sideroflexin-2.